The following is a 932-amino-acid chain: Probable serine/threonine-protein kinase clkA (932 aa).

Basic residues predominate over residues 1 to 10; sequence MDRFQTKRKT. 3 disordered regions span residues 1 to 21, 39 to 198, and 212 to 562; these read MDRFQTKRKTYSYNGYSNNDY, YKNN…YGDT, and NDYD…TNTN. 2 stretches are compositionally biased toward low complexity: residues 11-21 and 39-123; these read YSYNGYSNNDY and YKNN…ENNY. Residues 124 to 143 are compositionally biased toward polar residues; that stretch reads FQSENQSNKDQNSYFNSSYL. 4 stretches are compositionally biased toward low complexity: residues 148–196, 218–305, 314–342, and 351–562; these read DNYN…NSYG, NNNN…NGGN, VFNNNNNNNNNNNNNYNNYNSNNNYNNDY, and NIYS…TNTN. In terms of domain architecture, Protein kinase spans 590-920; the sequence is YKVLCTVGSG…ASDALSHPFL (331 aa). Residues 596-604 and Lys-619 each bind ATP; that span reads VGSGTFSTV. Residue Asp-719 is the Proton acceptor of the active site.

It belongs to the protein kinase superfamily. CMGC Ser/Thr protein kinase family.

The enzyme catalyses L-seryl-[protein] + ATP = O-phospho-L-seryl-[protein] + ADP + H(+). It carries out the reaction L-threonyl-[protein] + ATP = O-phospho-L-threonyl-[protein] + ADP + H(+). The protein is Probable serine/threonine-protein kinase clkA (clkA) of Dictyostelium discoideum (Social amoeba).